A 186-amino-acid chain; its full sequence is Large ribosomal subunit protein uL22 (186 aa).

Positions A160–E186 are disordered. Basic and acidic residues predominate over residues R177–E186.

It belongs to the universal ribosomal protein uL22 family.

This is Large ribosomal subunit protein uL22 (RpL17) from Aedes aegypti (Yellowfever mosquito).